Here is a 140-residue protein sequence, read N- to C-terminus: Small ribosomal subunit protein uS12 (140 aa).

Position 102 is a 3-methylthioaspartic acid (D102).

The protein belongs to the universal ribosomal protein uS12 family. As to quaternary structure, part of the 30S ribosomal subunit. Contacts proteins S8 and S17. May interact with IF1 in the 30S initiation complex.

Its function is as follows. With S4 and S5 plays an important role in translational accuracy. In terms of biological role, interacts with and stabilizes bases of the 16S rRNA that are involved in tRNA selection in the A site and with the mRNA backbone. Located at the interface of the 30S and 50S subunits, it traverses the body of the 30S subunit contacting proteins on the other side and probably holding the rRNA structure together. The combined cluster of proteins S8, S12 and S17 appears to hold together the shoulder and platform of the 30S subunit. In Bacillus cytotoxicus (strain DSM 22905 / CIP 110041 / 391-98 / NVH 391-98), this protein is Small ribosomal subunit protein uS12.